The following is a 578-amino-acid chain: Polypeptide N-acetylgalactosaminyltransferase 4 (578 aa).

At M1 to C12 the chain is on the cytoplasmic side. A helical; Signal-anchor for type II membrane protein transmembrane segment spans residues L13–S35. The Lumenal segment spans residues P36 to K578. 5 disulfide bridges follow: C124–C357, C348–C421, C457–C477, C503–C518, and C547–C565. The catalytic subdomain A stretch occupies residues L134 to R243. Residues D175 and R204 each contribute to the substrate site. Positions 227 and 229 each coordinate Mn(2+). Residues P303–P365 are catalytic subdomain B. A substrate-binding site is contributed by W334. H362 contacts Mn(2+). Y370 lines the substrate pocket. In terms of domain architecture, Ricin B-type lectin spans W444–E577. N471 carries N-linked (GlcNAc...) asparagine glycosylation.

Belongs to the glycosyltransferase 2 family. GalNAc-T subfamily. Requires Mn(2+) as cofactor. As to expression, highly expressed in sublingual gland, stomach, colon, small intestine and cervix. Expressed at intermediate levels in kidney, ovary, lung and uterus. Weakly expressed in spleen, liver, heart and brain. Not expressed in submandibular and parotid glands, skeletal muscle and testis.

It is found in the golgi apparatus membrane. It catalyses the reaction L-seryl-[protein] + UDP-N-acetyl-alpha-D-galactosamine = a 3-O-[N-acetyl-alpha-D-galactosaminyl]-L-seryl-[protein] + UDP + H(+). It carries out the reaction L-threonyl-[protein] + UDP-N-acetyl-alpha-D-galactosamine = a 3-O-[N-acetyl-alpha-D-galactosaminyl]-L-threonyl-[protein] + UDP + H(+). It functions in the pathway protein modification; protein glycosylation. Functionally, catalyzes the initial reaction in O-linked oligosaccharide biosynthesis, the transfer of an N-acetyl-D-galactosamine residue to a serine or threonine residue on the protein receptor. Has a highest activity toward EA2 peptide substrate and a much lower activity with EPO-T, Muc2, Muc1a, Muc1b. The polypeptide is Polypeptide N-acetylgalactosaminyltransferase 4 (Galnt4) (Mus musculus (Mouse)).